A 299-amino-acid chain; its full sequence is Putative S-adenosyl-L-methionine-dependent methyltransferase MAB_0027c (299 aa).

Residues Asp-126 and 155–156 each bind S-adenosyl-L-methionine; that span reads DL.

This sequence belongs to the UPF0677 family.

Functionally, exhibits S-adenosyl-L-methionine-dependent methyltransferase activity. This chain is Putative S-adenosyl-L-methionine-dependent methyltransferase MAB_0027c, found in Mycobacteroides abscessus (strain ATCC 19977 / DSM 44196 / CCUG 20993 / CIP 104536 / JCM 13569 / NCTC 13031 / TMC 1543 / L948) (Mycobacterium abscessus).